The primary structure comprises 470 residues: Retinoic acid receptor RXR-gamma (470 aa).

Residues 1-145 (MHLATETAPS…NSPGALTKHI (145 aa)) form a modulating region. 2 consecutive NR C4-type zinc fingers follow at residues 146–166 (CAICGDRSSGKHYGVYSCEGC) and 182–206 (CRDSKDCLIDKRQRNRCQYCRYQKC). A DNA-binding region (nuclear receptor) is located at residues 146–211 (CAICGDRSSG…RYQKCLAMGM (66 aa)). Residues 212 to 235 (KREAVQEERQRSREKSDTEAESTS) are hinge. Over residues 217–229 (QEERQRSREKSDT) the composition is skewed to basic and acidic residues. Residues 217–242 (QEERQRSREKSDTEAESTSSTSEEMP) are disordered. The NR LBD domain maps to 238–466 (SEEMPVERIL…TFLMEMLETP (229 aa)).

Belongs to the nuclear hormone receptor family. NR2 subfamily. As to quaternary structure, homodimer. Heterodimer; with a rar molecule. Binds DNA preferentially as a rar/rxr heterodimer.

The protein resides in the nucleus. Receptor for retinoic acid. Retinoic acid receptors bind as heterodimers to their target response elements in response to their ligands, all-trans or 9-cis retinoic acid, and regulate gene expression in various biological processes. The rar/rxr heterodimers bind to the retinoic acid response elements (RARE) composed of tandem 5'-AGGTCA-3' sites known as DR1-DR5. The high affinity ligand for rxrs is 9-cis retinoic acid. In Xenopus laevis (African clawed frog), this protein is Retinoic acid receptor RXR-gamma (rxrg).